Consider the following 510-residue polypeptide: Putative cytochrome P450 cyp-13B1 (510 aa).

Position 456 (Cys456) interacts with heme.

It belongs to the cytochrome P450 family. Heme is required as a cofactor.

Functionally, cytochromes P450 are a group of heme-thiolate monooxygenases. They oxidize a variety of structurally unrelated compounds, including steroids, fatty acids, and xenobiotics. May play a role in the regulation of lifespan. This Caenorhabditis elegans protein is Putative cytochrome P450 cyp-13B1.